The sequence spans 244 residues: Protein crossbronx (244 aa).

Residues 20–176 (QQEYKILAEY…VQKNIKESKE (157 aa)) enclose the UBC core domain. The interval 209-244 (AGRSKQTEPSAQQANGGHATGLSWVKEGEFKPLSIE) is disordered.

The protein belongs to the ubiquitin-conjugating enzyme family. FTS subfamily.

The sequence is that of Protein crossbronx (cbx) from Drosophila erecta (Fruit fly).